The primary structure comprises 524 residues: Probable 1,3-beta-glucanosyltransferase GAS3 (524 aa).

Positions 1 to 21 are cleaved as a signal peptide; sequence MQLSKSILLAALAATPSLVNA. Cys-78 and Cys-107 are disulfide-bonded. Residues Tyr-96, Asn-168, and Glu-169 each contribute to the (1,3-beta-D-glucosyl)n site. Glu-169 (proton donor) is an active-site residue. Residue Asn-201 is glycosylated (N-linked (GlcNAc...) asparagine). (1,3-beta-D-glucosyl)n contacts are provided by Asp-212 and Arg-217. Disulfide bonds link Cys-226-Cys-369 and Cys-254-Cys-286. A glycan (N-linked (GlcNAc...) asparagine) is linked at Asn-269. Glu-283 functions as the Nucleophile in the catalytic mechanism. Tyr-315 is a binding site for (1,3-beta-D-glucosyl)n. N-linked (GlcNAc...) asparagine glycans are attached at residues Asn-350, Asn-385, Asn-404, and Asn-422. The interval 461 to 498 is disordered; sequence TSQSSSRSLTSSTSPSSSTGSSSSTGSSSASSSSKSKG. The GPI-anchor amidated glycine moiety is linked to residue Gly-498. The propeptide at 499–524 is removed in mature form; the sequence is VGNIVNVSFSQSGYLALFAGLISALL.

It belongs to the glycosyl hydrolase 72 family. In terms of processing, the GPI-anchor is attached to the protein in the endoplasmic reticulum and serves to target the protein to the cell surface. There, the glucosamine-inositol phospholipid moiety is cleaved off and the GPI-modified mannoprotein is covalently attached via its lipidless GPI glycan remnant to the 1,6-beta-glucan of the outer cell wall layer. N-glycosylated.

Its subcellular location is the secreted. It is found in the cell wall. It localises to the membrane. In terms of biological role, splits internally a 1,3-beta-glucan molecule and transfers the newly generated reducing end (the donor) to the non-reducing end of another 1,3-beta-glucan molecule (the acceptor) forming a 1,3-beta linkage, resulting in the elongation of 1,3-beta-glucan chains in the cell wall. Involved in cell wall biosynthesis and morphogenesis. This chain is Probable 1,3-beta-glucanosyltransferase GAS3 (GAS3), found in Saccharomyces cerevisiae (strain ATCC 204508 / S288c) (Baker's yeast).